The primary structure comprises 261 residues: Indole-3-glycerol phosphate synthase (261 aa).

The protein belongs to the TrpC family.

The catalysed reaction is 1-(2-carboxyphenylamino)-1-deoxy-D-ribulose 5-phosphate + H(+) = (1S,2R)-1-C-(indol-3-yl)glycerol 3-phosphate + CO2 + H2O. It participates in amino-acid biosynthesis; L-tryptophan biosynthesis; L-tryptophan from chorismate: step 4/5. This Campylobacter concisus (strain 13826) protein is Indole-3-glycerol phosphate synthase.